A 907-amino-acid chain; its full sequence is Valine--tRNA ligase (907 aa).

A 'HIGH' region motif is present at residues 45–55; that stretch reads PNVTGSLHMGH. A 'KMSKS' region motif is present at residues 554 to 558; the sequence is KMSKS. Lys557 lines the ATP pocket. The stretch at 838–870 forms a coiled coil; that stretch reads GQLIDLEAERARLMKDVSKIEQDIEKLSAKLSN.

The protein belongs to the class-I aminoacyl-tRNA synthetase family. ValS type 1 subfamily. As to quaternary structure, monomer.

It localises to the cytoplasm. It catalyses the reaction tRNA(Val) + L-valine + ATP = L-valyl-tRNA(Val) + AMP + diphosphate. Its function is as follows. Catalyzes the attachment of valine to tRNA(Val). As ValRS can inadvertently accommodate and process structurally similar amino acids such as threonine, to avoid such errors, it has a 'posttransfer' editing activity that hydrolyzes mischarged Thr-tRNA(Val) in a tRNA-dependent manner. In Bartonella henselae (strain ATCC 49882 / DSM 28221 / CCUG 30454 / Houston 1) (Rochalimaea henselae), this protein is Valine--tRNA ligase.